The sequence spans 125 residues: Aspartate 1-decarboxylase 2 (125 aa).

The active-site Schiff-base intermediate with substrate; via pyruvic acid is serine 25. Serine 25 bears the Pyruvic acid (Ser) mark. Position 57 (threonine 57) interacts with substrate. Tyrosine 58 acts as the Proton donor in catalysis. 73 to 75 (GAA) serves as a coordination point for substrate.

The protein belongs to the PanD family. As to quaternary structure, heterooctamer of four alpha and four beta subunits. The cofactor is pyruvate. In terms of processing, is synthesized initially as an inactive proenzyme, which is activated by self-cleavage at a specific serine bond to produce a beta-subunit with a hydroxyl group at its C-terminus and an alpha-subunit with a pyruvoyl group at its N-terminus.

The protein localises to the cytoplasm. The enzyme catalyses L-aspartate + H(+) = beta-alanine + CO2. The protein operates within cofactor biosynthesis; (R)-pantothenate biosynthesis; beta-alanine from L-aspartate: step 1/1. Functionally, catalyzes the pyruvoyl-dependent decarboxylation of aspartate to produce beta-alanine. The chain is Aspartate 1-decarboxylase 2 from Gloeobacter violaceus (strain ATCC 29082 / PCC 7421).